The chain runs to 329 residues: NTD biosynthesis operon regulator NtdR (329 aa).

Positions 2 to 56 (PTIDEIAKLCNVSKTTVSRVLNNHPYVSKEKRDMILKAINELDYTPNYLARNFRR) constitute an HTH lacI-type domain. A DNA-binding region (H-T-H motif) is located at residues 4 to 23 (IDEIAKLCNVSKTTVSRVLN).

Its function is as follows. Positively regulates the ntdABC operon and negatively regulates its own transcription. Binds to NTD to induce ntdABC transcription. The sequence is that of NTD biosynthesis operon regulator NtdR (ntdR) from Bacillus subtilis (strain 168).